A 166-amino-acid polypeptide reads, in one-letter code: NAD(P)H-quinone oxidoreductase subunit I, chloroplastic (166 aa).

2 consecutive 4Fe-4S ferredoxin-type domains span residues 55–84 (GRIH…VDWK) and 95–124 (LNYS…MTEE). Residues C64, C67, C70, C74, C104, C107, C110, and C114 each coordinate [4Fe-4S] cluster.

It belongs to the complex I 23 kDa subunit family. As to quaternary structure, NDH is composed of at least 16 different subunits, 5 of which are encoded in the nucleus. [4Fe-4S] cluster serves as cofactor.

Its subcellular location is the plastid. It localises to the chloroplast thylakoid membrane. The catalysed reaction is a plastoquinone + NADH + (n+1) H(+)(in) = a plastoquinol + NAD(+) + n H(+)(out). It carries out the reaction a plastoquinone + NADPH + (n+1) H(+)(in) = a plastoquinol + NADP(+) + n H(+)(out). Functionally, NDH shuttles electrons from NAD(P)H:plastoquinone, via FMN and iron-sulfur (Fe-S) centers, to quinones in the photosynthetic chain and possibly in a chloroplast respiratory chain. The immediate electron acceptor for the enzyme in this species is believed to be plastoquinone. Couples the redox reaction to proton translocation, and thus conserves the redox energy in a proton gradient. In Acanthospermum australe (Paraguayan starburr), this protein is NAD(P)H-quinone oxidoreductase subunit I, chloroplastic.